Reading from the N-terminus, the 279-residue chain is Movement protein (279 aa).

Positions 255–279 (SPPFAIGSPSASRNNSFRSQVVNGL) are disordered. Positions 263–279 (PSASRNNSFRSQVVNGL) are enriched in polar residues.

This sequence belongs to the cucumovirus movement protein family.

Its subcellular location is the host cell junction. The protein localises to the host plasmodesma. Its function is as follows. Transports viral genome to neighboring plant cells directly through plasmosdesmata, without any budding. The movement protein allows efficient cell to cell propagation, by bypassing the host cell wall barrier. Acts by forming a tubular structure at the host plasmodesmata, enlarging it enough to allow free passage of virion capsids. The sequence is that of Movement protein from Cucumis sativus (Cucumber).